The primary structure comprises 1594 residues: Calpain-D (1594 aa).

2 consecutive RanBP2-type zinc fingers follow at residues Met1–Val35 and Leu135–Leu164. Disordered regions lie at residues Glu210–Asp256, Glu371–Gln400, Ala420–Gly459, Lys524–Glu543, and Ala554–Gly606. The segment covering His215–Gly229 has biased composition (basic residues). 2 stretches are compositionally biased toward polar residues: residues Arg246–Ile255 and Glu371–Arg385. Phosphoserine is present on Ser250. Residues Asn438–Gly459 show a composition bias toward low complexity. The segment covering Gln528–Ser541 has biased composition (polar residues). Residues Arg643 to Gln673 form a RanBP2-type 3 zinc finger. The tract at residues Gln684 to Pro703 is disordered. RanBP2-type zinc fingers lie at residues Arg704–Lys733 and Arg744–Pro774. Disordered stretches follow at residues Arg786–Gly811 and Ser860–Val884. Over residues Ser860 to Gly871 the composition is skewed to polar residues. The RanBP2-type 6 zinc-finger motif lies at Ser927–Leu956. The Calpain catalytic domain maps to Leu1014 to Arg1321. Catalysis depends on residues Cys1079, His1245, and Asn1265.

It belongs to the peptidase C2 family.

Functionally, has a role in eye development. In terms of biological role, calcium-regulated non-lysosomal thiol-protease. This Drosophila melanogaster (Fruit fly) protein is Calpain-D (sol).